Reading from the N-terminus, the 228-residue chain is Superoxide dismutase [Mn] (228 aa).

Residues 1 to 23 (MTRSLKTTLILLASSVISMSALA) form the signal peptide. Mn(2+)-binding residues include H49, H100, D188, and H192.

The protein belongs to the iron/manganese superoxide dismutase family. The cofactor is Mn(2+).

It is found in the periplasm. The enzyme catalyses 2 superoxide + 2 H(+) = H2O2 + O2. In terms of biological role, destroys superoxide anion radicals which are normally produced within the cells and which are toxic to biological systems. In Acinetobacter baylyi (strain ATCC 33305 / BD413 / ADP1), this protein is Superoxide dismutase [Mn] (sodA).